The following is a 128-amino-acid chain: Protein Wnt-8 (128 aa).

A lipid anchor (O-palmitoleoyl serine) is attached at S1. 2 disulfide bridges follow: C69-C109 and C85-C102. N-linked (GlcNAc...) asparagine glycosylation occurs at N72.

The protein belongs to the Wnt family. Post-translationally, palmitoleoylation is required for efficient binding to frizzled receptors. Depalmitoleoylation leads to Wnt signaling pathway inhibition. Proteolytic processing by tiki1 and tiki2 promotes oxidation and formation of large disulfide-bond oligomers, leading to inactivation of wnt8.

It localises to the secreted. The protein localises to the extracellular space. Its subcellular location is the extracellular matrix. Ligand for members of the frizzled family of seven transmembrane receptors. Probable developmental protein. May be a signaling molecule which affects the development of discrete regions of tissues. Is likely to signal over only few cell diameters. The protein is Protein Wnt-8 (WNT-8) of Evasterias troschelii (Mottled sea star).